Consider the following 855-residue polypeptide: Putative AAA family ATPase R476 (855 aa).

Basic and acidic residues predominate over residues 1–13; sequence MNKRDFSELKNSE. A disordered region spans residues 1–37; sequence MNKRDFSELKNSESSEESSLVSSTETVRSSKRNKKFH. Low complexity predominate over residues 17-27; the sequence is ESSLVSSTETV. Position 610 to 617 (610 to 617) interacts with ATP; sequence GPPGTGKT.

Belongs to the AAA ATPase family.

This Acanthamoeba polyphaga mimivirus (APMV) protein is Putative AAA family ATPase R476.